Consider the following 148-residue polypeptide: Low molecular weight protein-tyrosine-phosphatase Etp (148 aa).

Cys-13 acts as the Nucleophile in catalysis. Arg-19 is an active-site residue. Asp-119 functions as the Proton donor in the catalytic mechanism.

This sequence belongs to the low molecular weight phosphotyrosine protein phosphatase family.

It catalyses the reaction O-phospho-L-tyrosyl-[protein] + H2O = L-tyrosyl-[protein] + phosphate. Its function is as follows. Dephosphorylates etk. The chain is Low molecular weight protein-tyrosine-phosphatase Etp (etp) from Escherichia coli O157:H7.